The chain runs to 624 residues: Multicopper oxidase elcG (624 aa).

Positions 1–18 are cleaved as a signal peptide; it reads MACNILNFLTGLLSLSST. Plastocyanin-like domains lie at 48–160 and 216–373; these read PGRA…IERG and CMDA…TIRI. Asparagine 65 is a glycosylation site (N-linked (GlcNAc...) asparagine). 4 residues coordinate Cu cation: histidine 96, histidine 98, histidine 140, and histidine 142. Asparagine 271, asparagine 296, and asparagine 464 each carry an N-linked (GlcNAc...) asparagine glycan. Residues 474 to 603 enclose the Plastocyanin-like 3 domain; it reads FLFQDPSQIE…GGMGVVILDG (130 aa). Cu cation-binding residues include histidine 511, histidine 514, histidine 516, histidine 585, cysteine 586, histidine 587, and histidine 591.

It belongs to the multicopper oxidase family.

It functions in the pathway secondary metabolite biosynthesis. Its function is as follows. Multicopper oxidase; part of the gene cluster that mediates the biosynthesis of elsinochrome C, a perelyenequinone phytotoxin structurally similar to cercosporin. The first step of elsinochrome C biosynthesis is performed by the polyketide synthase elcA which catalyzes the formation of nor-toralactone. The starter unit acyltransferase (SAT) domain of elcA initiates polyketide extension by the selective utilization of acetyl-CoA, which is elongated to the heptaketide in the beta-ketoacyl synthase (KS) domain by successive condensations with six malonyl units introduced by the malonyl acyltransferase (MAT) domain. The product template (PT) domain catalyzes C4-C9 and C2-C11 aldol cyclizations and dehydrations to a trihydroxynaphthalene, which is thought to be delivered to the thioesterase (TE) domain for product release. The bifunctional enzyme elcB then methylates nor-toralactone to toralactone before conducting an unusual oxidative aromatic ring opening. The next step in perylenequinone biosynthesis is an O-methylation at the nascent OH-6 of the elcB product performed by the O-methyltransferase elcD. The oxidative coupling of the two monomeric naphthol units in perylenequinone biosynthesis is catalyzed by the FAD-dependent monooxygenase elcE and the multicopper oxidase elcG. ElcG might catalyze the first intermolecular coupling in a regio- and stereo-selective manner via a phenol radical coupling mechanism and the elcE could forge the second C-C bond intramolecularly via a hydride transfer mechanism. The fasciclin domain-containing protein elcF might also play a role duting this step. The last piece of the puzzle in the biosynthesis of elsinochrome C is the additional annulation by enolate coupling to afford the dihydrobenzo(ghi)perylenequinone system, catalyzed by the FAD-dependent monooxygenase elcH. This chain is Multicopper oxidase elcG, found in Phaeosphaeria nodorum (strain SN15 / ATCC MYA-4574 / FGSC 10173) (Glume blotch fungus).